The following is a 255-amino-acid chain: Receptor expression-enhancing protein 3 (255 aa).

3 helical membrane passes run 1 to 21 (MVSW…YPAY), 35 to 55 (YVRW…ETVA), and 59 to 79 (VAWF…LLSP). Residues 158 to 242 (TIQGDEPVGQ…KGRKEVRYGS (85 aa)) form a disordered region. T201 carries the phosphothreonine modification. A Phosphoserine modification is found at S210. The span at 222 to 231 (RSQSMKSVKT) shows a compositional bias: polar residues.

It belongs to the DP1 family. As to expression, expressed in circumvallate papillae.

Its subcellular location is the endoplasmic reticulum membrane. Its function is as follows. Microtubule-binding protein required to ensure proper cell division and nuclear envelope reassembly by sequestering the endoplasmic reticulum away from chromosomes during mitosis. Probably acts by clearing the endoplasmic reticulum membrane from metaphase chromosomes. The sequence is that of Receptor expression-enhancing protein 3 (REEP3) from Homo sapiens (Human).